The following is a 176-amino-acid chain: Glutathione-regulated potassium-efflux system ancillary protein KefF (176 aa).

FMN contacts are provided by residues His8, 14–17 (SHAN), 65–68 (MQWY), and 105–108 (TTGG).

Belongs to the NAD(P)H dehydrogenase (quinone) family. KefF subfamily. In terms of assembly, homodimer. Interacts with KefC. It depends on FMN as a cofactor.

Its subcellular location is the cell inner membrane. It catalyses the reaction a quinone + NADH + H(+) = a quinol + NAD(+). The catalysed reaction is a quinone + NADPH + H(+) = a quinol + NADP(+). Its function is as follows. Regulatory subunit of a potassium efflux system that confers protection against electrophiles. Required for full activity of KefC. Shows redox enzymatic activity, but this enzymatic activity is not required for activation of KefC. The polypeptide is Glutathione-regulated potassium-efflux system ancillary protein KefF (Salmonella dublin (strain CT_02021853)).